The primary structure comprises 437 residues: 26S proteasome regulatory subunit 4 homolog (437 aa).

The interval 1–47 (MGQGVSSGQDKKKKKGSNQKPKYEPPVQSKFGRKKRKGGPATAEKLP) is disordered. G2 carries the N-myristoyl glycine lipid modification. 223-230 (GAPGTGKT) contributes to the ATP binding site. Residues K234, K255, and K290 each participate in a glycyl lysine isopeptide (Lys-Gly) (interchain with G-Cter in ubiquitin) cross-link.

This sequence belongs to the AAA ATPase family.

Its subcellular location is the cytoplasm. The protein localises to the nucleus. Its function is as follows. The 26S proteasome is involved in the ATP-dependent degradation of ubiquitinated proteins. The regulatory (or ATPase) complex confers ATP dependency and substrate specificity to the 26S complex. Has ATPase activity. This Saccharomyces cerevisiae (strain ATCC 204508 / S288c) (Baker's yeast) protein is 26S proteasome regulatory subunit 4 homolog (RPT2).